The following is a 348-amino-acid chain: N-(sulfonatooxy)prop-2-enimidothioate sulfolyase (348 aa).

7 Kelch repeats span residues 1 to 33 (MART…VIGD), 34 to 85 (KLYC…VAVG), 87 to 133 (KLYV…FHSM), 139 to 194 (HVYV…VVQG), 209 to 254 (KIPT…FAHA), 259 to 314 (YIII…ASTT), and 322 to 348 (GLLV…NSST). Residues glutamate 46, arginine 94, threonine 129, phenylalanine 130, and arginine 157 each coordinate a (Z)-N-(sulfonatooxy)alkanimidothioate. Catalysis depends on arginine 94, which acts as the Proton donor. The active-site Proton donor is the arginine 157. Residue glutamate 220 is the Proton acceptor of the active site. Residue glutamate 266 coordinates Fe(2+). Residue arginine 269 participates in a (Z)-N-(sulfonatooxy)alkanimidothioate binding. Positions 270 and 274 each coordinate Fe(2+). A (Z)-N-(sulfonatooxy)alkanimidothioate is bound by residues tryptophan 309 and valine 310.

Homodimer. Requires Fe(2+) as cofactor. As to expression, expressed constitutively in roots, stems, leaves, flowers, siliques and seedlings.

It catalyses the reaction (Z)-N-(sulfonatooxy)prop-2-enimidothioate = allyl thiocyanate + sulfate. The catalysed reaction is (Z)-N-(sulfonatooxy)prop-2-enimidothioate = 2-(thiiran-2-yl)acetonitrile + sulfate. The enzyme catalyses (Z)-N-(sulfonatooxy)prop-2-enimidothioate = allyl isothiocyanate + sulfate. It carries out the reaction (Z)-phenyl-N-(sulfonatooxy)methanimidothioate = phenylacetonitrile + sulfur + sulfate. It catalyses the reaction glucoerucin + H2O = (Z)-4-methylsulfanylbutyl-N-(sulfonatooxy)methanimidothioate + D-glucose. The catalysed reaction is (Z)-4-methylsulfanylbutyl-N-(sulfonatooxy)methanimidothioate = 5-(methylsulfanyl)pentanenitrile + sulfur + sulfate + H(+). Its activity is regulated as follows. Stimulated by the presence of Fe(2+) leading to an increase formation of both thiocyanate and epithionitrile with allylglucosinolate as substrate in the presence of myrosinase. Repressed by EDTA. Functionally, specifier protein that contributes to constitutive and herbivore-induced simple nitrile formation. Catalyzes allylthiocyanate and corresponding epithionitrile formation from allylglucosinolate in the presence of myrosinase. Also converts aliphatic glucosinolates, such as indol-3-ylmethylglucosinolate, 4-methylsulfinylbutylglucosinolate, 4-methylthiobutyl- and benzylisothiocyanate, to simple nitriles. This chain is N-(sulfonatooxy)prop-2-enimidothioate sulfolyase, found in Thlaspi arvense (Field penny-cress).